The primary structure comprises 774 residues: Probable E3 ubiquitin-protein ligase HECTD2 (774 aa).

Residues 1-51 (MSEAARDLSPGAPPAVAAAAPEERKGKEPEREKLPPIVTAGAAAGLDRGSK) are disordered. The residue at position 9 (Ser9) is a Phosphoserine. Residues 21–34 (PEERKGKEPEREKL) are compositionally biased toward basic and acidic residues. Residues 435–774 (KRADLKKKLK…ISNSEGFGLE (340 aa)) form the HECT domain. Cys742 serves as the catalytic Glycyl thioester intermediate.

It catalyses the reaction S-ubiquitinyl-[E2 ubiquitin-conjugating enzyme]-L-cysteine + [acceptor protein]-L-lysine = [E2 ubiquitin-conjugating enzyme]-L-cysteine + N(6)-ubiquitinyl-[acceptor protein]-L-lysine.. Its pathway is protein modification; protein ubiquitination. Its function is as follows. E3 ubiquitin-protein ligase which accepts ubiquitin from an E2 ubiquitin-conjugating enzyme in the form of a thioester and then directly transfers the ubiquitin to targeted substrates. This Mus musculus (Mouse) protein is Probable E3 ubiquitin-protein ligase HECTD2 (Hectd2).